A 536-amino-acid polypeptide reads, in one-letter code: Heparanase (536 aa).

A signal peptide spans 1 to 28; that stretch reads MLRPLLLLWLWGRLGALTQGTPAGTAPT. Residues 55–57 and T90 contribute to the heparan sulfate group site; that span reads DAS. Positions 103–150 are cleaved as a propeptide — linker peptide; sequence PTSEERSYWQSQDNNDICGSERVSADVLRKLQMEWPFQELLLLREQYQ. C120 and C172 form a disulfide bridge. 151–155 serves as a coordination point for heparan sulfate group; that stretch reads REFKN. N155, N193, and N210 each carry an N-linked (GlcNAc...) asparagine glycan. E218 acts as the Proton donor in catalysis. Heparan sulfate group-binding positions include 263-273, H289, and R296; that span reads QPRGKTVKLLR. The tract at residues 281–410 is required for heterodimerization with the heparanase 8 kDa subunit; it reads EVIDSLTWHH…LLFKKLVGPK (130 aa). E336 serves as the catalytic Nucleophile. Heparan sulfate group contacts are provided by residues 341 to 343 and 382 to 384; these read YGG and GNY. C430 and C535 are joined by a disulfide. An N-linked (GlcNAc...) asparagine glycan is attached at N452. A required for transferring proheparanase to the Golgi apparatus, secretion and subsequent enzyme activity and for enhancement of PKB/AKT1 phosphorylation region spans residues 520 to 536; that stretch reads FSYGFFVIRNAKIAACI.

It belongs to the glycosyl hydrolase 79 family. As to quaternary structure, heterodimer; heterodimer formation between the 8 kDa and the 50 kDa subunits is required for enzyme activity. Interacts with TF; the interaction, inhibited by heparin, enhances the generation of activated factor X and activates coagulation. Interacts with HRG; the interaction is enhanced at acidic pH, partially inhibits binding of HPSE to cell surface receptors and modulates its enzymatic activity. Interacts with SDC1; the interaction enhances the shedding of SDC1. Interacts with HPSE2. Post-translationally, proteolytically processed. The cleavage of the 65 kDa form leads to the generation of a linker peptide, and the 8 kDa and 50 kDa products. The active form, the 8/50 kDa heterodimer, is resistant to degradation. Complete removal of the linker peptide appears to be a prerequisite to the complete activation of the enzyme. N-glycosylated. Glycosylation of the 50 kDa subunit appears to be essential for its solubility.

Its subcellular location is the lysosome membrane. It localises to the secreted. The protein localises to the nucleus. It catalyses the reaction endohydrolysis of (1-&gt;4)-beta-D-glycosidic bonds of heparan sulfate chains in heparan sulfate proteoglycan.. Inhibited by laminarin sulfate and, to a lower extent, by heparin and sulfamin. Activated by calcium and magnesium. Inhibited by EDTA. In terms of biological role, endoglycosidase that cleaves heparan sulfate proteoglycans (HSPGs) into heparan sulfate side chains and core proteoglycans. Participates in extracellular matrix (ECM) degradation and remodeling. Selectively cleaves the linkage between a glucuronic acid unit and an N-sulfo glucosamine unit carrying either a 3-O-sulfo or a 6-O-sulfo group. Can also cleave the linkage between a glucuronic acid unit and an N-sulfo glucosamine unit carrying a 2-O-sulfo group, but not linkages between a glucuronic acid unit and a 2-O-sulfated iduronic acid moiety. It is essentially inactive at neutral pH but becomes active under acidic conditions such as during tumor invasion and in inflammatory processes. Facilitates cell migration associated with metastasis, wound healing and inflammation. Enhances shedding of syndecans, and increases endothelial invasion and angiogenesis in myelomas. Acts as a procoagulant by increasing the generation of activation factor X in the presence of tissue factor and activation factor VII. Increases cell adhesion to the extracellular matrix (ECM), independent of its enzymatic activity. Induces AKT1/PKB phosphorylation via lipid rafts increasing cell mobility and invasion. Heparin increases this AKT1/PKB activation. Regulates osteogenesis. Enhances angiogenesis through up-regulation of SRC-mediated activation of VEGF. Implicated in hair follicle inner root sheath differentiation and hair homeostasis. The sequence is that of Heparanase (Hpse) from Rattus norvegicus (Rat).